Consider the following 371-residue polypeptide: UDP-N-acetylglucosamine--N-acetylmuramyl-(pentapeptide) pyrophosphoryl-undecaprenol N-acetylglucosamine transferase (371 aa).

UDP-N-acetyl-alpha-D-glucosamine is bound by residues 15–17 (TGG), asparagine 126, arginine 172, serine 199, isoleucine 256, 275–280 (ALTVSE), and glutamine 301.

Belongs to the glycosyltransferase 28 family. MurG subfamily.

The protein localises to the cell inner membrane. It carries out the reaction di-trans,octa-cis-undecaprenyl diphospho-N-acetyl-alpha-D-muramoyl-L-alanyl-D-glutamyl-meso-2,6-diaminopimeloyl-D-alanyl-D-alanine + UDP-N-acetyl-alpha-D-glucosamine = di-trans,octa-cis-undecaprenyl diphospho-[N-acetyl-alpha-D-glucosaminyl-(1-&gt;4)]-N-acetyl-alpha-D-muramoyl-L-alanyl-D-glutamyl-meso-2,6-diaminopimeloyl-D-alanyl-D-alanine + UDP + H(+). It functions in the pathway cell wall biogenesis; peptidoglycan biosynthesis. Cell wall formation. Catalyzes the transfer of a GlcNAc subunit on undecaprenyl-pyrophosphoryl-MurNAc-pentapeptide (lipid intermediate I) to form undecaprenyl-pyrophosphoryl-MurNAc-(pentapeptide)GlcNAc (lipid intermediate II). The polypeptide is UDP-N-acetylglucosamine--N-acetylmuramyl-(pentapeptide) pyrophosphoryl-undecaprenol N-acetylglucosamine transferase (Francisella tularensis subsp. tularensis (strain WY96-3418)).